Consider the following 185-residue polypeptide: dCTP deaminase (185 aa).

Residues 108-113 (KSTYAR), 132-134 (TLE), Gln153, Tyr167, and Gln177 each bind dCTP. Residue Glu134 is the Proton donor/acceptor of the active site.

Belongs to the dCTP deaminase family. In terms of assembly, homotrimer.

The enzyme catalyses dCTP + H2O + H(+) = dUTP + NH4(+). Its pathway is pyrimidine metabolism; dUMP biosynthesis; dUMP from dCTP (dUTP route): step 1/2. Catalyzes the deamination of dCTP to dUTP. The sequence is that of dCTP deaminase from Pelagibacter ubique (strain HTCC1062).